The chain runs to 486 residues: Ribulose bisphosphate carboxylase large chain (486 aa).

N125 and T175 together coordinate substrate. The active-site Proton acceptor is the K177. K179 is a substrate binding site. The Mg(2+) site is built by K203, D205, and E206. K203 carries the post-translational modification N6-carboxylysine. Residue H295 is the Proton acceptor of the active site. Positions 296, 328, and 380 each coordinate substrate.

Belongs to the RuBisCO large chain family. Type I subfamily. As to quaternary structure, heterohexadecamer of 8 large chains and 8 small chains. Requires Mg(2+) as cofactor.

The enzyme catalyses 2 (2R)-3-phosphoglycerate + 2 H(+) = D-ribulose 1,5-bisphosphate + CO2 + H2O. It catalyses the reaction D-ribulose 1,5-bisphosphate + O2 = 2-phosphoglycolate + (2R)-3-phosphoglycerate + 2 H(+). Its function is as follows. RuBisCO catalyzes two reactions: the carboxylation of D-ribulose 1,5-bisphosphate, the primary event in carbon dioxide fixation, as well as the oxidative fragmentation of the pentose substrate. Both reactions occur simultaneously and in competition at the same active site. The sequence is that of Ribulose bisphosphate carboxylase large chain from Bradyrhizobium diazoefficiens (strain JCM 10833 / BCRC 13528 / IAM 13628 / NBRC 14792 / USDA 110).